Here is a 240-residue protein sequence, read N- to C-terminus: Putative cytochrome c-type biogenesis protein DbsD-like (240 aa).

A run of 6 helical transmembrane segments spans residues 32-52 (FVFF…ILPI), 74-94 (FFFC…ATLL), 104-124 (GIPV…LNIV), 149-169 (VGIG…LLIW), 176-196 (LFIG…PIII), and 218-238 (APFS…SSIL).

Belongs to the DsbD family.

It is found in the plastid. The protein localises to the chloroplast membrane. In terms of biological role, could be involved in cytochrome c synthesis. The polypeptide is Putative cytochrome c-type biogenesis protein DbsD-like (Porphyra purpurea (Red seaweed)).